The following is a 2763-amino-acid chain: Large tegument protein deneddylase (2763 aa).

Residues methionine 1–tyrosine 247 form a deubiquitination activity region. The Peptidase C76 domain occupies alanine 12–serine 237. Active-site residues include cysteine 32, aspartate 168, and histidine 170. The interaction with inner tegument protein stretch occupies residues leucine 495–serine 523. The segment at valine 2456–proline 2476 is disordered. Tandem repeats lie at residues proline 2458–glutamine 2460, proline 2461–glutamine 2463, proline 2464–glutamine 2466, proline 2467–glutamine 2469, and proline 2470–glutamine 2472. The tract at residues proline 2458–glutamine 2472 is 5 X 3 AA repeats of P-A-Q. The span at alanine 2459–proline 2476 shows a compositional bias: low complexity.

It belongs to the herpesviridae large tegument protein family. As to quaternary structure, interacts with host CUL1 and CUL4A; these interactions inhibit the E3 ligase activity of cullins. Interacts with inner tegument protein. Interacts with capsid vertex specific component CVC2. Interacts with the major capsid protein/MCP.

Its subcellular location is the virion tegument. The protein resides in the host cytoplasm. It is found in the host nucleus. The catalysed reaction is Thiol-dependent hydrolysis of ester, thioester, amide, peptide and isopeptide bonds formed by the C-terminal Gly of ubiquitin (a 76-residue protein attached to proteins as an intracellular targeting signal).. Its function is as follows. Large tegument protein that plays multiple roles in the viral cycle. During viral entry, remains associated with the capsid while most of the tegument is detached and participates in the capsid transport toward the host nucleus. Plays a role in the routing of the capsid at the nuclear pore complex and subsequent uncoating. Within the host nucleus, acts as a deneddylase and promotes the degradation of nuclear CRLs (cullin-RING ubiquitin ligases) and thereby stabilizes nuclear CRL substrates, while cytoplasmic CRLs remain unaffected. These modifications prevent host cell cycle S-phase progression and create a favorable environment allowing efficient viral genome replication. Participates later in the secondary envelopment of capsids. Indeed, plays a linker role for the association of the outer viral tegument to the capsids together with the inner tegument protein. This Homo sapiens (Human) protein is Large tegument protein deneddylase.